Here is a 350-residue protein sequence, read N- to C-terminus: Protein-glutamate methylesterase/protein-glutamine glutaminase (350 aa).

In terms of domain architecture, Response regulatory spans 5 to 122; sequence RVLCVDDSAL…REGMLAYSEL (118 aa). 4-aspartylphosphate is present on D56. The CheB-type methylesterase domain occupies 153 to 345; it reads LLSSEKLIAI…QRMLAQISAG (193 aa). Catalysis depends on residues S165, H191, and D287.

Belongs to the CheB family. Phosphorylated by CheA. Phosphorylation of the N-terminal regulatory domain activates the methylesterase activity.

It is found in the cytoplasm. It carries out the reaction [protein]-L-glutamate 5-O-methyl ester + H2O = L-glutamyl-[protein] + methanol + H(+). It catalyses the reaction L-glutaminyl-[protein] + H2O = L-glutamyl-[protein] + NH4(+). Functionally, involved in chemotaxis. Part of a chemotaxis signal transduction system that modulates chemotaxis in response to various stimuli. Catalyzes the demethylation of specific methylglutamate residues introduced into the chemoreceptors (methyl-accepting chemotaxis proteins or MCP) by CheR. Also mediates the irreversible deamidation of specific glutamine residues to glutamic acid. Does not interact with the C-terminal pentapeptide of the chemoreceptors. This is Protein-glutamate methylesterase/protein-glutamine glutaminase from Pectobacterium atrosepticum (strain SCRI 1043 / ATCC BAA-672) (Erwinia carotovora subsp. atroseptica).